A 475-amino-acid chain; its full sequence is Ankyrin repeat, SAM and basic leucine zipper domain-containing protein 1 (475 aa).

Residues serine 17, serine 18, and serine 20 each carry the phosphoserine modification. 6 ANK repeats span residues glutamate 45–serine 74, tyrosine 78–phenylalanine 107, aspartate 110–valine 144, arginine 148–serine 177, asparagine 181–leucine 210, and aspartate 214–glycine 243. Positions serine 272–glutamate 334 constitute an SAM domain.

As to quaternary structure, interacts with DDX4, PIWIL1, RANBP9 and TDRD1.

It localises to the cytoplasm. Its function is as follows. Plays a central role during spermatogenesis by repressing transposable elements and preventing their mobilization, which is essential for the germline integrity. Acts via the piRNA metabolic process, which mediates the repression of transposable elements during meiosis by forming complexes composed of piRNAs and Piwi proteins and governs the methylation and subsequent repression of transposons. Its association with pi-bodies suggests a participation in the primary piRNAs metabolic process. Required prior to the pachytene stage to facilitate the production of multiple types of piRNAs, including those associated with repeats involved in the regulation of retrotransposons. May act by mediating protein-protein interactions during germ cell maturation. The polypeptide is Ankyrin repeat, SAM and basic leucine zipper domain-containing protein 1 (ASZ1) (Mustela putorius furo (European domestic ferret)).